Here is a 178-residue protein sequence, read N- to C-terminus: Ribosome maturation factor RimP (178 aa).

The protein belongs to the RimP family.

Its subcellular location is the cytoplasm. Required for maturation of 30S ribosomal subunits. The sequence is that of Ribosome maturation factor RimP from Mycobacterium avium (strain 104).